The following is a 405-amino-acid chain: Divinyl chlorophyllide a 8-vinyl-reductase, chloroplastic (405 aa).

The N-terminal 58 residues, 1–58 (MAALLLSSHLTAASSSSTTSPTARPAPSFVSFRAANAAPKGARRGWPFLASSVEPPPA), are a transit peptide targeting the chloroplast.

The protein localises to the plastid. The protein resides in the chloroplast. It carries out the reaction protochlorophyllide a + NADP(+) = 3,8-divinyl protochlorophyllide a + NADPH + H(+). Its pathway is porphyrin-containing compound metabolism; chlorophyll biosynthesis. Functionally, catalyzes the conversion of divinyl chlorophyllide to monovinyl chlorophyllide. Reduces the 8-vinyl group of the tetrapyrrole to an ethyl group using NADPH as the reductant. Can use (3,8-divinyl)-chlorophyllide a (DV-Chlidea) &gt; (3,8-divinyl)-chlorophyll a (DV-Chla) &gt; (3,8-divinyl)-protochlorophyllide a (DV-Pchlidea) &gt; (3,8-divinyl)-magnesium-protoporphyrin IX monomethyl ester (DV-MPE) &gt; (3,8-divinyl)-magnesium-protoporphyrin IX (DV-Mg-Proto) as substrates. The chain is Divinyl chlorophyllide a 8-vinyl-reductase, chloroplastic (DVR) from Oryza sativa subsp. indica (Rice).